Reading from the N-terminus, the 151-residue chain is Protein PLANT CADMIUM RESISTANCE 1 (151 aa).

2 consecutive transmembrane segments (helical) span residues Ile31–Val47 and Cys54–Gly71.

Belongs to the cornifelin family. As to quaternary structure, homopentamer. Expressed in aerial part, but not in roots. Detected in the guard and mesophyll cells.

It localises to the cell membrane. Involved in glutathione-independent cadmium resistance. Reduces cadmium uptake rather than activating efflux, but is not closely coupled to calcium transporter. The polypeptide is Protein PLANT CADMIUM RESISTANCE 1 (PCR1) (Arabidopsis thaliana (Mouse-ear cress)).